A 312-amino-acid polypeptide reads, in one-letter code: Protein Rep40 (312 aa).

Positions 84–239 (DPQYAASVFL…LDHDFGKVTK (156 aa)) constitute an SF3 helicase domain. 110 to 117 (GPATTGKT) contacts ATP. Residues 264 to 301 (KGGAKKRPAPSDADISEPKRVRESVAQPSTSDAEASIN) are disordered.

In terms of assembly, homooligomer.

It is found in the host nucleus. The catalysed reaction is ATP + H2O = ADP + phosphate + H(+). In terms of biological role, plays a critical role during packaging of viral DNA into empty capsids, where they are thought to be part of the packaging motor complex. The single stranded genomic DNA is packaged in a 3' to 5' direction and requires the association of viral DNA with Rep40. This chain is Protein Rep40 (Rep40), found in Mammalia (AAV-2).